We begin with the raw amino-acid sequence, 451 residues long: Crh-like protein 2 (451 aa).

An N-terminal signal peptide occupies residues 1-21 (MQFNSLVLLAGATILSPFVQA). Positions 22 to 241 (QTWTTCNPLN…FTKVPFTMYV (220 aa)) constitute a GH16 domain. Cys27 and Cys34 form a disulfide bridge. Asn31, Asn43, Asn49, and Asn59 each carry an N-linked (GlcNAc...) asparagine glycan. The active-site Nucleophile is Glu121. The active-site Proton donor is the Glu125. Glu125 contributes to the chitin binding site. 3 N-linked (GlcNAc...) asparagine glycosylation sites follow: Asn130, Asn143, and Asn165. Chitin contacts are provided by Arg206, Trp210, and Thr222. Asn273 is a glycosylation site (N-linked (GlcNAc...) asparagine). A helical membrane pass occupies residues 305–325 (VYCGGGAAVAALVSAFLFTFL). Residue Asn366 is glycosylated (N-linked (GlcNAc...) asparagine).

It belongs to the glycosyl hydrolase 16 family. CRH1 subfamily. As to quaternary structure, forms homodimers as well as heterodimers with other crh protein members crh1 and crh3. Dimerization may be necessary for the transglycosylation activity.

Its subcellular location is the membrane. It catalyses the reaction Random endo-hydrolysis of N-acetyl-beta-D-glucosaminide (1-&gt;4)-beta-linkages in chitin and chitodextrins.. Functionally, dual chitinase/transglycosylase that plays a role in cell wall architecture. Chitinase and transglycosylase activities are coupled. Required for the polysaccharide cross-linking at the septa and the cell wall. More specifically, transfers chitin to 1,6-beta-glucan in the cell wall. The sequence is that of Crh-like protein 2 from Botryotinia fuckeliana (strain B05.10) (Noble rot fungus).